The chain runs to 465 residues: Hexokinase-4 (465 aa).

A Hexokinase domain is found at alanine 10–alanine 454. The tract at residues glutamate 67–valine 203 is hexokinase small subdomain. Position 78-83 (aspartate 78–asparagine 83) interacts with ATP. Substrate-binding positions include serine 151–phenylalanine 152, threonine 168–lysine 169, and asparagine 204–aspartate 205. The hexokinase large subdomain stretch occupies residues asparagine 204 to glutamate 443. Position 228 (threonine 228) interacts with ATP. Substrate-binding residues include asparagine 231, glutamate 256, and glutamate 290. Residues glycine 295–lysine 296, threonine 332–serine 336, and serine 411–leucine 415 each bind ATP.

This sequence belongs to the hexokinase family. In terms of assembly, monomer. Interacts with MIDN; the interaction occurs preferentially at low glucose levels and results in inhibition of hexokinase activity. Interacts with GCKR; leading to sequestration in the nucleus. Expression is restricted to the liver and pancreatic islets (at protein level).

The protein localises to the cytoplasm. It is found in the nucleus. The protein resides in the mitochondrion. It carries out the reaction a D-hexose + ATP = a D-hexose 6-phosphate + ADP + H(+). It catalyses the reaction D-fructose + ATP = D-fructose 6-phosphate + ADP + H(+). The catalysed reaction is D-glucose + ATP = D-glucose 6-phosphate + ADP + H(+). The enzyme catalyses D-mannose + ATP = D-mannose 6-phosphate + ADP + H(+). Its pathway is carbohydrate metabolism; hexose metabolism. It participates in carbohydrate degradation; glycolysis; D-glyceraldehyde 3-phosphate and glycerone phosphate from D-glucose: step 1/4. Its activity is regulated as follows. Subject to allosteric regulation. Low glucose and high fructose-6-phosphate triggers association with the inhibitor GCKR followed by sequestration in the nucleus. Catalyzes the phosphorylation of hexose, such as D-glucose, D-fructose and D-mannose, to hexose 6-phosphate (D-glucose 6-phosphate, D-fructose 6-phosphate and D-mannose 6-phosphate, respectively). Compared to other hexokinases, has a weak affinity for D-glucose, and is effective only when glucose is abundant. Mainly expressed in pancreatic beta cells and the liver and constitutes a rate-limiting step in glucose metabolism in these tissues. Since insulin secretion parallels glucose metabolism and the low glucose affinity of GCK ensures that it can change its enzymatic activity within the physiological range of glucose concentrations, GCK acts as a glucose sensor in the pancreatic beta cell. In pancreas, plays an important role in modulating insulin secretion. In liver, helps to facilitate the uptake and conversion of glucose by acting as an insulin-sensitive determinant of hepatic glucose usage. Required to provide D-glucose 6-phosphate for the synthesis of glycogen. Mediates the initial step of glycolysis by catalyzing phosphorylation of D-glucose to D-glucose 6-phosphate. In Rattus norvegicus (Rat), this protein is Hexokinase-4.